A 402-amino-acid chain; its full sequence is MYYHNQHQGKSILSSSRMPISSERHPFLRGNGTGDSGLILSTDAKPRLKWTPDLHERFVEAVNQLGGGDKATPKTIMKVMGIPGLTLYHLKSHLQKYRLSKNLNGQANSSLNKTSVMTMVEENPPEVDESHSESLSIGPQPSMNLPISDALQMQIEVQRRLHEQLEVQRHLQLRIEAQGKYLQSILEKAQETLGRQNLGAAGIEATKAQLSELVSKVSADYPDSSFLEPKELQNLHHQQMQKTYPPNSSLDSCLTSSEGTQKAPKMLDNRLGLRTYIGDSTSEQKEIMEEPFFHRMELTWAEEESLRENHNRPYLSTMVNNAEPRISSSRRSPGRLSIGVGLHEHRGRSSNNSEYTEERFNENNEDCKLETHTRTALDLNTHDENYGTTRPKQFDLNGFSWN.

The HTH myb-type domain occupies 42–102 (TDAKPRLKWT…HLQKYRLSKN (61 aa)). The segment at residues 73-98 (PKTIMKVMGIPGLTLYHLKSHLQKYR) is a DNA-binding region (H-T-H motif). The stretch at 148–168 (SDALQMQIEVQRRLHEQLEVQ) forms a coiled coil. Positions 161-166 (LHEQLE) match the LHEQLE motif. Residues 238-260 (QQMQKTYPPNSSLDSCLTSSEGT) show a composition bias toward polar residues. Disordered regions lie at residues 238 to 266 (QQMQ…APKM), 344 to 363 (EHRG…FNEN), and 382 to 402 (HDEN…FSWN).

This sequence belongs to the MYB-CC family. In terms of assembly, isoforms 1 and 2: homodimer. Isoform 3: loss of dimerization. In terms of tissue distribution, expressed in phloem and/or cambium.

It is found in the nucleus. Functionally, transcription factor that may act on the GAL1 promoter. Acts redundantly with MYR2 as a repressor of flowering and organ elongation under decreased light intensity. Represses gibberellic acid (GA)-dependent responses and affects levels of bioactive GA. The polypeptide is Myb-related protein 1 (Arabidopsis thaliana (Mouse-ear cress)).